Consider the following 663-residue polypeptide: DNA topoisomerase 4 subunit B (663 aa).

ATP-binding positions include Y21, N61, D88, 130–136 (GLHGVGI), and K360. The 115-residue stretch at 440 to 554 (TELFIVEGDS…EGHLYLAKPP (115 aa)) folds into the Toprim domain. The Mg(2+) site is built by E446, D519, and D521.

It belongs to the type II topoisomerase family. ParE type 1 subfamily. As to quaternary structure, heterotetramer composed of ParC and ParE. It depends on Mg(2+) as a cofactor. The cofactor is Mn(2+). Ca(2+) serves as cofactor.

It catalyses the reaction ATP-dependent breakage, passage and rejoining of double-stranded DNA.. In terms of biological role, topoisomerase IV is essential for chromosome segregation. It relaxes supercoiled DNA. Performs the decatenation events required during the replication of a circular DNA molecule. This chain is DNA topoisomerase 4 subunit B, found in Rickettsia typhi (strain ATCC VR-144 / Wilmington).